Here is a 192-residue protein sequence, read N- to C-terminus: uncharacterized protein (192 aa).

In terms of domain architecture, Nudix hydrolase spans 29–160; the sequence is HRQAAVLIPI…PLDIYRRGDS (132 aa). The Nudix box motif lies at 67-89; that stretch reads GAVDDTDTSVIAAALREAEEEVA. Mg(2+) contacts are provided by Glu83 and Glu87.

The protein belongs to the Nudix hydrolase family. PCD1 subfamily. Mn(2+) serves as cofactor. The cofactor is Mg(2+).

Probably mediates the hydrolysis of some nucleoside diphosphate derivatives. This is an uncharacterized protein from Escherichia fergusonii (strain ATCC 35469 / DSM 13698 / CCUG 18766 / IAM 14443 / JCM 21226 / LMG 7866 / NBRC 102419 / NCTC 12128 / CDC 0568-73).